Here is a 504-residue protein sequence, read N- to C-terminus: Histidine--tRNA ligase (504 aa).

It belongs to the class-II aminoacyl-tRNA synthetase family. Homodimer.

The protein resides in the cytoplasm. The catalysed reaction is tRNA(His) + L-histidine + ATP = L-histidyl-tRNA(His) + AMP + diphosphate + H(+). This is Histidine--tRNA ligase from Rhizobium rhizogenes (strain K84 / ATCC BAA-868) (Agrobacterium radiobacter).